Here is a 774-residue protein sequence, read N- to C-terminus: Dapper homolog 2 (774 aa).

Residues proline 67–lysine 93 are a coiled coil. Disordered regions lie at residues arginine 188 to alanine 225, threonine 295 to threonine 319, threonine 345 to lysine 500, and cysteine 624 to serine 710. Over residues valine 438 to alanine 452 the composition is skewed to polar residues. Residues arginine 637–proline 648 show a composition bias toward low complexity. 2 stretches are compositionally biased toward basic and acidic residues: residues alanine 655–proline 672 and serine 686–serine 700. Residues methionine 771–valine 774 carry the PDZ-binding motif.

This sequence belongs to the dapper family. In terms of assembly, can form homodimers and heterodimers with DACT1 or DACT3. Interacts with CSNK1D, PKA catalytic subunit, PKC-type kinase, CSNK2B, DVL1, DVL2, DVL3, VANGL1, VANGL2, TGFBR1, CTNNB1, CTNND2, CTNND1, LEF1, TCF7, TCF7L1 and HDAC1.

In terms of biological role, involved in regulation of intracellular signaling pathways during development. Negatively regulates the Nodal signaling pathway, possibly by promoting the lysosomal degradation of Nodal receptors, such as TGFBR1. May be involved in control of the morphogenetic behavior of kidney ureteric bud cells by keeping cells epithelial and restraining their mesenchymal character. May play an inhibitory role in the re-epithelialization of skin wounds by attenuating TGF-beta signaling. The protein is Dapper homolog 2 (DACT2) of Homo sapiens (Human).